The sequence spans 342 residues: Serpentine receptor class r-10 (342 aa).

Topologically, residues 1–11 are extracellular; it reads MTGELWLTLVD. The helical transmembrane segment at 12-32 threads the bilayer; it reads TADIVGFSMTFCVNIVLLFLL. The Cytoplasmic segment spans residues 33–38; sequence KNRGKN. The chain crosses the membrane as a helical span at residues 39–59; sequence LGTYKHLMAFFSVFSIFYAII. Over 60-92 the chain is Extracellular; sequence ESILRPIMHIENATFFLISRKRFNYSTRLGKIN. Residues Asn-71 and Asn-83 are each glycosylated (N-linked (GlcNAc...) asparagine). A helical transmembrane segment spans residues 93–113; it reads SAFYCACFATSFVVSGVHFVY. Residues 114–131 lie on the Cytoplasmic side of the membrane; sequence RFFASCKPHLLRSFNMPY. Residues 132–152 traverse the membrane as a helical segment; sequence LLLWPLGCSIPVMMWASVSYF. The Extracellular segment spans residues 153–202; sequence LYPDTAFTEAAVTNVLNTHYHSIKKDNVSYIAYVYYQYDENGVRYVYLKN. N-linked (GlcNAc...) asparagine glycosylation occurs at Asn-179. A helical transmembrane segment spans residues 203–223; that stretch reads LLGCFVHYFVMSATFVVMFIC. At 224-257 the chain is on the cytoplasmic side; the sequence is GYLTWKTMRKHKTASDRTRQLQKQLFKALVLQTL. Residues 258–278 form a helical membrane-spanning segment; sequence IPTIFMYAPTGVMFIAPFFSI. Topologically, residues 279-285 are extracellular; that stretch reads NLNANAN. A helical transmembrane segment spans residues 286–306; that stretch reads FIVFCSFLYPGLDPLILILII. Residues 307–342 are Cytoplasmic-facing; sequence RDFRQTVFKFFCLRKKNSVDESRSTTRANMSQVATH.

Belongs to the nematode receptor-like protein str family. As to quaternary structure, interacts with odr-4.

The protein localises to the cell projection. Its subcellular location is the cilium membrane. An odorant receptor which affects chemotaxis to the volatile odorant diacetyl. Specifies AWA neuronal cell fate via the odr-7 pathway. In Caenorhabditis briggsae, this protein is Serpentine receptor class r-10.